Reading from the N-terminus, the 491-residue chain is D-xylose-proton symporter (491 aa).

The Cytoplasmic portion of the chain corresponds to 1 to 9; the sequence is MNTQYNSSY. Residues 10 to 30 traverse the membrane as a helical segment; the sequence is IFSITLVATLGGLLFGYDTAV. The Periplasmic segment spans residues 31–55; sequence ISGTVESLNTVFVAPQNLSESAANS. A helical transmembrane segment spans residues 56 to 76; it reads LLGFCVASALIGCIIGGALGG. At 77-89 the chain is on the cytoplasmic side; it reads YCSNRFGRRDSLK. Residues 90 to 110 traverse the membrane as a helical segment; sequence IAAVLFFISGVGSAWPELGFT. Topologically, residues 111–133 are periplasmic; that stretch reads SINPDNTVPVYLAGYVPEFVIYR. Residues 134-154 traverse the membrane as a helical segment; sequence IIGGIGVGLASMLSPMYIAEL. Residues 155 to 165 lie on the Cytoplasmic side of the membrane; the sequence is APAHIRGKLVS. A helical membrane pass occupies residues 166–186; sequence FNQFAIIFGQLLVYCVNYFIA. Q168 is a binding site for beta-D-xylose. The Periplasmic segment spans residues 187–200; that stretch reads RSGDASWLNTDGWR. A helical membrane pass occupies residues 201-221; sequence YMFASECIPALLFLMLLYTVP. Topologically, residues 222–272 are cytoplasmic; it reads ESPRWLMSRGKQEQAEGILRKIMGNTLATQAVQEIKHSLDHGRKTGGRLLM. Residues 273 to 293 form a helical membrane-spanning segment; the sequence is FGVGVIVIGVMLSIFQQFVGI. Residues 288-289 and N294 each bind beta-D-xylose; that span reads QQ. Over 294–312 the chain is Periplasmic; it reads NVVLYYAPEVFKTLGASTD. The helical transmembrane segment at 313–333 threads the bilayer; it reads IALLQTIIVGVINLTFTVLAI. Residues 334–343 are Cytoplasmic-facing; sequence MTVDKFGRKP. The helical transmembrane segment at 344 to 364 threads the bilayer; the sequence is LQIIGALGMAIGMFSLGTAFY. The Periplasmic portion of the chain corresponds to 365–369; it reads TQAPG. A helical transmembrane segment spans residues 370-390; it reads IVALLSMLFYVAAFAMSWGPV. The Cytoplasmic segment spans residues 391-407; that stretch reads CWVLLSEIFPNAIRGKA. 2 residues coordinate beta-D-xylose: W392 and Q415. The helical transmembrane segment at 408–428 threads the bilayer; sequence LAIAVAAQWLANYFVSWTFPM. Residues 429 to 442 lie on the Periplasmic side of the membrane; it reads MDKNSWLVAHFHNG. The helical transmembrane segment at 443–463 threads the bilayer; sequence FSYWIYGCMGVLAALFMWKFV. Topologically, residues 464 to 491 are cytoplasmic; the sequence is PETKGKTLEELEALWEPETKKTQQTATL.

It belongs to the major facilitator superfamily. Sugar transporter (TC 2.A.1.1) family.

It localises to the cell inner membrane. It carries out the reaction D-xylose(in) + H(+)(in) = D-xylose(out) + H(+)(out). Its function is as follows. Uptake of D-xylose across the boundary membrane with the concomitant transport of protons into the cell (symport system). The sequence is that of D-xylose-proton symporter (xylE) from Escherichia coli O157:H7.